Reading from the N-terminus, the 753-residue chain is 5-methyltetrahydropteroyltriglutamate--homocysteine methyltransferase (753 aa).

5-methyltetrahydropteroyltri-L-glutamate is bound by residues 17–20 (RELK) and K117. L-homocysteine-binding positions include 431 to 433 (IGS) and E484. L-methionine-binding positions include 431–433 (IGS) and E484. 5-methyltetrahydropteroyltri-L-glutamate is bound by residues 515 to 516 (RC) and W561. D599 contributes to the L-homocysteine binding site. Position 599 (D599) interacts with L-methionine. Position 605 (E605) interacts with 5-methyltetrahydropteroyltri-L-glutamate. H641, C643, and E665 together coordinate Zn(2+). Residue H694 is the Proton donor of the active site. Zn(2+) is bound at residue C726.

Belongs to the vitamin-B12 independent methionine synthase family. It depends on Zn(2+) as a cofactor.

It carries out the reaction 5-methyltetrahydropteroyltri-L-glutamate + L-homocysteine = tetrahydropteroyltri-L-glutamate + L-methionine. The protein operates within amino-acid biosynthesis; L-methionine biosynthesis via de novo pathway; L-methionine from L-homocysteine (MetE route): step 1/1. Its function is as follows. Catalyzes the transfer of a methyl group from 5-methyltetrahydrofolate to homocysteine resulting in methionine formation. The chain is 5-methyltetrahydropteroyltriglutamate--homocysteine methyltransferase from Escherichia coli O9:H4 (strain HS).